Reading from the N-terminus, the 384-residue chain is Succinyl-diaminopimelate desuccinylase (384 aa).

His71 contributes to the Zn(2+) binding site. Residue Asp73 is part of the active site. Asp104 is a binding site for Zn(2+). Residue Glu139 is the Proton acceptor of the active site. 3 residues coordinate Zn(2+): Glu140, Glu168, and His357.

Belongs to the peptidase M20A family. DapE subfamily. As to quaternary structure, homodimer. It depends on Zn(2+) as a cofactor. Co(2+) serves as cofactor.

The catalysed reaction is N-succinyl-(2S,6S)-2,6-diaminopimelate + H2O = (2S,6S)-2,6-diaminopimelate + succinate. Its pathway is amino-acid biosynthesis; L-lysine biosynthesis via DAP pathway; LL-2,6-diaminopimelate from (S)-tetrahydrodipicolinate (succinylase route): step 3/3. Catalyzes the hydrolysis of N-succinyl-L,L-diaminopimelic acid (SDAP), forming succinate and LL-2,6-diaminopimelate (DAP), an intermediate involved in the bacterial biosynthesis of lysine and meso-diaminopimelic acid, an essential component of bacterial cell walls. The sequence is that of Succinyl-diaminopimelate desuccinylase from Bradyrhizobium sp. (strain ORS 278).